Reading from the N-terminus, the 819-residue chain is Disintegrin and metalloproteinase domain-containing protein 9 (819 aa).

The N-terminal stretch at 1–28 (MGSGARFPSGTLRVRWLLLLGLVGPVLG) is a signal peptide. Over 29-697 (AARPGFQQTS…YNEMNTALRD (669 aa)) the chain is Extracellular. N-linked (GlcNAc...) asparagine glycans are attached at residues asparagine 125, asparagine 144, asparagine 154, and asparagine 231. Residues 212 to 406 (RYVELFIVVD…KGGNCLLNIP (195 aa)) form the Peptidase M12B domain. Intrachain disulfides connect cysteine 322-cysteine 401, cysteine 363-cysteine 385, cysteine 365-cysteine 370, cysteine 473-cysteine 493, cysteine 644-cysteine 656, cysteine 650-cysteine 662, and cysteine 664-cysteine 673. Zn(2+) is bound at residue histidine 347. Glutamate 348 is an active-site residue. 2 residues coordinate Zn(2+): histidine 351 and histidine 357. N-linked (GlcNAc...) asparagine glycans are attached at residues asparagine 381 and asparagine 487. One can recognise a Disintegrin domain in the interval 414–501 (APSCGNKLVD…FCQPDVFIQN (88 aa)). An EGF-like domain is found at 644–698 (CDVQKKCHGHGVCNSNKNCHCENGWAPPNCETKGYGGSVDSGPTYNEMNTALRDG). The chain crosses the membrane as a helical span at residues 698 to 718 (GLLVFFFLIVPLIVCAIFIFI). The Cytoplasmic segment spans residues 719-819 (KRDQLWRSYF…PAPPLYSSLT (101 aa)). 2 disordered regions span residues 734 to 763 (QTYESDGKNQANPSRQPGSVPRHVSPVTPP) and 780 to 819 (AKQPQQFPSRPPPPQPKVSSQGNLIPARPAPAPPLYSSLT). A compositionally biased stretch (polar residues) spans 735–750 (TYESDGKNQANPSRQP). Serine 758 is modified (phosphoserine). At threonine 761 the chain carries Phosphothreonine.

Interacts with SH3GL2 and SNX9 through its cytoplasmic tail. Interacts with ITGA6. Zn(2+) is required as a cofactor. Proteolytically cleaved in the trans-Golgi network before it reaches the plasma membrane to generate a mature protein. The removal of the pro-domain occurs via cleavage at two different sites. Processed most likely by a pro-protein convertase such as furin, at the boundary between the pro-domain and the catalytic domain. An additional upstream cleavage pro-protein convertase site (Arg-56/Glu-57) has an important role in the activation of ADAM9. Post-translationally, phosphorylation is induced in vitro by phorbol-12-myristate-13-acetate (PMA). Widely expressed. Expressed in chondrocytes. Isoform 2 is highly expressed in liver and heart.

It is found in the cell membrane. It localises to the secreted. Synthesized as an inactive form which is proteolytically cleaved to generate an active enzyme. Processing at the upstream site is particularly important for activation of the proenzyme, whereas processing at the boundary between the pro-domain and the catalytic domain does not appear to be essential. Inhibited by hydroxamic acid-based inhibitors. Its function is as follows. Metalloprotease that cleaves and releases a number of molecules with important roles in tumorigenesis and angiogenesis, such as TEK, KDR, EPHB4, CD40, VCAM1 and CDH5. May mediate cell-cell, cell-matrix interactions and regulate the motility of cells via interactions with integrins. May act as alpha-secretase for amyloid precursor protein (APP). The protein is Disintegrin and metalloproteinase domain-containing protein 9 (ADAM9) of Homo sapiens (Human).